A 472-amino-acid polypeptide reads, in one-letter code: Methanethiol oxidase (472 aa).

Alanine 2 is modified (N-acetylalanine). A Phosphoserine modification is found at serine 467.

The protein belongs to the selenium-binding protein family. In terms of assembly, interacts with USP33. The N-terminus is blocked.

It localises to the nucleus. The protein localises to the cytoplasm. Its subcellular location is the cytosol. It is found in the membrane. It catalyses the reaction methanethiol + O2 + H2O = hydrogen sulfide + formaldehyde + H2O2 + H(+). Its pathway is organosulfur degradation. Its function is as follows. Catalyzes the oxidation of methanethiol, an organosulfur compound known to be produced in substantial amounts by gut bacteria. Selenium-binding protein which may be involved in the sensing of reactive xenobiotics in the cytoplasm. May be involved in intra-Golgi protein transport. This is Methanethiol oxidase (SELENBP1) from Bos taurus (Bovine).